We begin with the raw amino-acid sequence, 60 residues long: Large ribosomal subunit protein bL33 (60 aa).

Belongs to the bacterial ribosomal protein bL33 family.

The polypeptide is Large ribosomal subunit protein bL33 (Christiangramia forsetii (strain DSM 17595 / CGMCC 1.15422 / KT0803) (Gramella forsetii)).